The chain runs to 194 residues: Nucleoside triphosphate pyrophosphatase (194 aa).

Catalysis depends on Asp68, which acts as the Proton acceptor.

Belongs to the Maf family. Requires a divalent metal cation as cofactor.

It localises to the cytoplasm. It carries out the reaction a ribonucleoside 5'-triphosphate + H2O = a ribonucleoside 5'-phosphate + diphosphate + H(+). The enzyme catalyses a 2'-deoxyribonucleoside 5'-triphosphate + H2O = a 2'-deoxyribonucleoside 5'-phosphate + diphosphate + H(+). In terms of biological role, nucleoside triphosphate pyrophosphatase. May have a dual role in cell division arrest and in preventing the incorporation of modified nucleotides into cellular nucleic acids. The sequence is that of Nucleoside triphosphate pyrophosphatase from Corynebacterium jeikeium (strain K411).